The following is a 104-amino-acid chain: MYAIFVDGGRQYRVEPGMELDVDYRDIAAGENLKFETVLAVGAEDGLKLGAPTLDGVSVSASVLGMSQDKKIYIQKFRRRKHSKKRTGHRQKNTRIRIEEIAGV.

Belongs to the bacterial ribosomal protein bL21 family. As to quaternary structure, part of the 50S ribosomal subunit. Contacts protein L20.

Its function is as follows. This protein binds to 23S rRNA in the presence of protein L20. This is Large ribosomal subunit protein bL21 from Rhodopirellula baltica (strain DSM 10527 / NCIMB 13988 / SH1).